A 364-amino-acid polypeptide reads, in one-letter code: MQERHTEQDYRALLIADTPIIDVRAPIEFEQGAMPAAINLPLMNNDERAAVGTCYKQQGSDAALALGHKLVAGEIRQQRMDAWRAACLQNPQGILCCARGGQRSHIVQSWLHAAGIDYPLVEGGYKALRQTAIQATIELAQKPIVLIGGCTGSGKTLLVQQQPNGVDLEGLARHRGSAFGRTLQPQLSQASFENLLAAEMLKTDARQNLRLWVLEDESRMIGSNHLPECLRERMTQAAIAVVEDPFEIRLERLNEEYFLRMHHDFTHAYGDEQGWQEYCEYLHHGLSAIKRRLGLQRYNELAARLDAALTTQLTTGSTDGHLAWLVPLLEEYYDPMYRYQLEKKAEKVVFRGEWAEVAEWVKAQ.

In terms of domain architecture, Rhodanese spans 14-137 (LIADTPIIDV…LRQTAIQATI (124 aa)). Cys97 functions as the S-selanylcysteine intermediate in the catalytic mechanism.

This sequence belongs to the SelU family. In terms of assembly, monomer.

It catalyses the reaction 5-methylaminomethyl-2-thiouridine(34) in tRNA + selenophosphate + (2E)-geranyl diphosphate + H2O + H(+) = 5-methylaminomethyl-2-selenouridine(34) in tRNA + (2E)-thiogeraniol + phosphate + diphosphate. It carries out the reaction 5-methylaminomethyl-2-thiouridine(34) in tRNA + (2E)-geranyl diphosphate = 5-methylaminomethyl-S-(2E)-geranyl-thiouridine(34) in tRNA + diphosphate. The enzyme catalyses 5-methylaminomethyl-S-(2E)-geranyl-thiouridine(34) in tRNA + selenophosphate + H(+) = 5-methylaminomethyl-2-(Se-phospho)selenouridine(34) in tRNA + (2E)-thiogeraniol. The catalysed reaction is 5-methylaminomethyl-2-(Se-phospho)selenouridine(34) in tRNA + H2O = 5-methylaminomethyl-2-selenouridine(34) in tRNA + phosphate. Involved in the post-transcriptional modification of the uridine at the wobble position (U34) of tRNA(Lys), tRNA(Glu) and tRNA(Gln). Catalyzes the conversion of 2-thiouridine (S2U-RNA) to 2-selenouridine (Se2U-RNA). Acts in a two-step process involving geranylation of 2-thiouridine (S2U) to S-geranyl-2-thiouridine (geS2U) and subsequent selenation of the latter derivative to 2-selenouridine (Se2U) in the tRNA chain. This Escherichia coli O157:H7 protein is tRNA 2-selenouridine synthase.